Consider the following 309-residue polypeptide: Acetylglutamate kinase (309 aa).

Residues 82-83 (GG), R104, and N206 each bind substrate.

Belongs to the acetylglutamate kinase family. ArgB subfamily.

It localises to the cytoplasm. It catalyses the reaction N-acetyl-L-glutamate + ATP = N-acetyl-L-glutamyl 5-phosphate + ADP. It participates in amino-acid biosynthesis; L-arginine biosynthesis; N(2)-acetyl-L-ornithine from L-glutamate: step 2/4. In terms of biological role, catalyzes the ATP-dependent phosphorylation of N-acetyl-L-glutamate. This chain is Acetylglutamate kinase, found in Cupriavidus metallidurans (strain ATCC 43123 / DSM 2839 / NBRC 102507 / CH34) (Ralstonia metallidurans).